An 85-amino-acid polypeptide reads, in one-letter code: RNA-binding protein Hfq (85 aa).

A Sm domain is found at 9-68 (DPFLNALRRERIPVSIYLVNGIKLQGQIESFDQFVVLLKNTVSQMVYKHAISTVVPARIP).

Belongs to the Hfq family. Homohexamer.

RNA chaperone that binds small regulatory RNA (sRNAs) and mRNAs to facilitate mRNA translational regulation in response to envelope stress, environmental stress and changes in metabolite concentrations. Also binds with high specificity to tRNAs. The polypeptide is RNA-binding protein Hfq (Idiomarina loihiensis (strain ATCC BAA-735 / DSM 15497 / L2-TR)).